Reading from the N-terminus, the 361-residue chain is Myb/SANT-like DNA-binding domain-containing protein 7 (361 aa).

Residues 11–70 (RWSRQETRTLLSILGEAEYIQRLQTVHHNADVYQAVSKRMQQEGFRRTERQCRSKFKVLK) form the Myb-like domain. Disordered regions lie at residues 174–198 (TSDL…SYSS) and 217–272 (RLGV…ARRR). Polar residues-rich tracts occupy residues 187 to 198 (AGCSQGTPSYSS) and 226 to 249 (PCTS…SSSR).

In Homo sapiens (Human), this protein is Myb/SANT-like DNA-binding domain-containing protein 7.